Here is a 718-residue protein sequence, read N- to C-terminus: Heme peroxidase 2 (718 aa).

An N-terminal signal peptide occupies residues Met-1–Thr-19. The propeptide occupies Phe-20 to Pro-146. Disordered stretches follow at residues Arg-41–Asp-64 and Leu-108–Ser-144. The span at Asn-45–Asp-64 shows a compositional bias: polar residues. The segment covering Leu-109–Thr-118 has biased composition (low complexity). A compositionally biased stretch (basic residues) spans Ser-126–Asn-139. A disulfide bridge connects residues Cys-149 and Cys-164. Residue His-241 is the Proton acceptor of the active site. Asp-242 serves as a coordination point for Ca(2+). Cysteines 262 and 272 form a disulfide. Ser-311, Phe-313, Asp-315, and Ser-317 together coordinate Ca(2+). The N-linked (GlcNAc...) asparagine glycan is linked to Asn-354. A disulfide bridge connects residues Cys-358 and Cys-366. Residue His-477 coordinates heme b. N-linked (GlcNAc...) asparagine glycosylation is found at Asn-551, Asn-592, Asn-662, and Asn-673. The cysteines at positions 682 and 705 are disulfide-linked.

It belongs to the peroxidase family. Heme b serves as cofactor. In terms of tissue distribution, expressed in the hypodermis and gland cells of the pharynx. Specifically, there is low and transient expression from the distal bulb of the pharynx to the anterior of the buccal cavity. Whole body expression levels increase upon entry into the dauer phase.

The protein localises to the secreted. The catalysed reaction is 2 a phenolic donor + H2O2 = 2 a phenolic radical donor + 2 H2O. In terms of biological role, peroxidase which is involved in maintaining the cuticle integrity in the hypodermis and pharynx. It thus plays a role in conferring resistance against Gram-positive bacteria such as E.faecalis, S.aureus and C.diphtheriae, and yeast such as C.albicans. The chain is Heme peroxidase 2 from Caenorhabditis elegans.